We begin with the raw amino-acid sequence, 291 residues long: ATP synthase gamma chain (291 aa).

Belongs to the ATPase gamma chain family. In terms of assembly, F-type ATPases have 2 components, CF(1) - the catalytic core - and CF(0) - the membrane proton channel. CF(1) has five subunits: alpha(3), beta(3), gamma(1), delta(1), epsilon(1). CF(0) has three main subunits: a, b and c.

It is found in the cell membrane. Produces ATP from ADP in the presence of a proton gradient across the membrane. The gamma chain is believed to be important in regulating ATPase activity and the flow of protons through the CF(0) complex. The sequence is that of ATP synthase gamma chain from Streptococcus uberis (strain ATCC BAA-854 / 0140J).